Reading from the N-terminus, the 576-residue chain is Arginine--tRNA ligase (576 aa).

The 'HIGH' region signature appears at Ala132–His142.

It belongs to the class-I aminoacyl-tRNA synthetase family. In terms of assembly, monomer.

It is found in the cytoplasm. It carries out the reaction tRNA(Arg) + L-arginine + ATP = L-arginyl-tRNA(Arg) + AMP + diphosphate. The sequence is that of Arginine--tRNA ligase from Ehrlichia chaffeensis (strain ATCC CRL-10679 / Arkansas).